Reading from the N-terminus, the 130-residue chain is Small ribosomal subunit protein uS8 (130 aa).

It belongs to the universal ribosomal protein uS8 family. As to quaternary structure, part of the 30S ribosomal subunit. Contacts proteins S5 and S12.

One of the primary rRNA binding proteins, it binds directly to 16S rRNA central domain where it helps coordinate assembly of the platform of the 30S subunit. This is Small ribosomal subunit protein uS8 from Buchnera aphidicola subsp. Acyrthosiphon kondoi (Acyrthosiphon kondoi symbiotic bacterium).